Here is a 395-residue protein sequence, read N- to C-terminus: Acetate kinase 2 (395 aa).

Asn-8 contributes to the Mg(2+) binding site. Position 15 (Lys-15) interacts with ATP. Position 89 (Arg-89) interacts with substrate. Asp-146 acts as the Proton donor/acceptor in catalysis. Residues His-206–Gly-210, Asp-283–Arg-285, and Gly-331–Asn-335 each bind ATP. Residue Glu-383 participates in Mg(2+) binding.

The protein belongs to the acetokinase family. Homodimer. Requires Mg(2+) as cofactor. Mn(2+) serves as cofactor.

It localises to the cytoplasm. The catalysed reaction is acetate + ATP = acetyl phosphate + ADP. It functions in the pathway metabolic intermediate biosynthesis; acetyl-CoA biosynthesis; acetyl-CoA from acetate: step 1/2. Functionally, catalyzes the formation of acetyl phosphate from acetate and ATP. Can also catalyze the reverse reaction. The sequence is that of Acetate kinase 2 from Lactococcus lactis subsp. lactis (strain IL1403) (Streptococcus lactis).